The sequence spans 561 residues: Potassium-transporting ATPase potassium-binding subunit (561 aa).

The next 12 membrane-spanning stretches (helical) occupy residues 2–22 (GQGL…TPVL), 66–86 (IRAI…LIYF), 135–155 (ALGF…IAFI), 177–197 (ILLP…VPQT), 253–273 (LIET…YGVF), 280–300 (AWLL…VAAG), 327–347 (FGWA…CGAV), 354–374 (LMPQ…IWGG), 378–398 (GTAY…LMVG), 413–433 (IVLA…PSAI), 482–502 (LSTS…MLLL), and 531–551 (AGIV…LGPI).

The protein belongs to the KdpA family. In terms of assembly, the system is composed of three essential subunits: KdpA, KdpB and KdpC.

Its subcellular location is the cell inner membrane. In terms of biological role, part of the high-affinity ATP-driven potassium transport (or Kdp) system, which catalyzes the hydrolysis of ATP coupled with the electrogenic transport of potassium into the cytoplasm. This subunit binds the periplasmic potassium ions and delivers the ions to the membrane domain of KdpB through an intramembrane tunnel. In Nostoc sp. (strain PCC 7120 / SAG 25.82 / UTEX 2576), this protein is Potassium-transporting ATPase potassium-binding subunit.